A 353-amino-acid polypeptide reads, in one-letter code: ATP-dependent (S)-NAD(P)H-hydrate dehydratase (353 aa).

The YjeF C-terminal domain maps to 18 to 345 (MLARVRQMVP…DEVHTAFLNL (328 aa)). The disordered stretch occupies residues 95 to 121 (RSSPPALSSSDSGSSPSRTKSAPDTDP). Residues 96–114 (SSPPALSSSDSGSSPSRTK) show a composition bias toward low complexity. (6S)-NADPHX-binding positions include G143 and 196-202 (NVVEFGR). Residues 241 to 245 (KGAKD) and 260 to 269 (GGLKRSGGQG) each bind ATP. D270 provides a ligand contact to (6S)-NADPHX.

This sequence belongs to the NnrD/CARKD family. The cofactor is Mg(2+).

It localises to the cytoplasm. It catalyses the reaction (6S)-NADHX + ATP = ADP + phosphate + NADH + H(+). The enzyme catalyses (6S)-NADPHX + ATP = ADP + phosphate + NADPH + H(+). In terms of biological role, catalyzes the dehydration of the S-form of NAD(P)HX at the expense of ATP, which is converted to ADP. Together with NAD(P)HX epimerase, which catalyzes the epimerization of the S- and R-forms, the enzyme allows the repair of both epimers of NAD(P)HX, a damaged form of NAD(P)H that is a result of enzymatic or heat-dependent hydration. This is ATP-dependent (S)-NAD(P)H-hydrate dehydratase from Neurospora crassa (strain ATCC 24698 / 74-OR23-1A / CBS 708.71 / DSM 1257 / FGSC 987).